The sequence spans 215 residues: Abscisic acid receptor PYL6 (215 aa).

Positions 54 to 209 (HVVGPSQCFS…NLQSLAKLAE (156 aa)) are START-like. Cys61 and Cys190 are disulfide-bonded. Abscisate contacts are provided by residues Lys90, 120–125 (AAFSLE), 147–153 (RLMNYKS), and Glu174. A Gate loop motif is present at residues 116 to 120 (SGLPA). The Latch loop motif lies at 146 to 148 (HRL).

Belongs to the PYR/PYL/RCAR abscisic acid intracellular receptor family. As to quaternary structure, monomer. Homodimer. Binds ABA on one subunit only. Interacts with HAB1, ABI1 and ABI2, and possibly with other PP2Cs. Binds to CARs protein in an ABA-independent manner, both at the plasma membrane and in the nucleus. Interacts directly with CAR1 and CAR4. Interacts with MYC2 in the nucleus. Interaction with MYC2 is increased in the presence of abscisic acid.

It is found in the cytoplasm. The protein resides in the nucleus. The protein localises to the cell membrane. Its function is as follows. Receptor for abscisic acid (ABA) required for ABA-mediated responses such as stomatal closure and germination inhibition. Inhibits the activity of group-A protein phosphatases type 2C (PP2Cs) in an ABA-independent manner but more efficiently when activated by ABA. Can be activated by both (-)-ABA and (+)-ABA. May link ABA and jasmonate signaling pathways by modifying MYC2 transcriptional activity, and regulation of JAZ6 and JAZ8 gene expression by MYC2. This Arabidopsis thaliana (Mouse-ear cress) protein is Abscisic acid receptor PYL6 (PYL6).